We begin with the raw amino-acid sequence, 585 residues long: Zinc finger protein 496 (585 aa).

Positions 1 to 41 are disordered; sequence MPTALCPRVLAPKESEEPRKMRSPPGENPSPQGEPPSPESS. The span at 11–20 shows a compositional bias: basic and acidic residues; the sequence is APKESEEPRK. Residue Lys13 forms a Glycyl lysine isopeptide (Lys-Gly) (interchain with G-Cter in SUMO2) linkage. Residues 26–38 are compositionally biased toward pro residues; the sequence is GENPSPQGEPPSP. Residues 42 to 124 enclose the SCAN box domain; that stretch reads RRLFRRFRYQ…AAVEALEREP (83 aa). The tract at residues 141–167 is disordered; that stretch reads DDGDGPAAPQDLEQERMSAESQSYPDA. Ser182 carries the post-translational modification Phosphoserine. The KRAB domain maps to 220 to 294; sequence SPFKDMILCF…DLQDKEIPQA (75 aa). The disordered stretch occupies residues 358–397; the sequence is SSSGDEDSQHSPYCTEELRSPPEDLHSVPAHQSNASAEGE. The span at 373–383 shows a compositional bias: basic and acidic residues; that stretch reads EELRSPPEDLH. Over residues 387-397 the composition is skewed to polar residues; sequence AHQSNASAEGE. The segment at 405 to 427 adopts a C2H2-type 1; degenerate zinc-finger fold; the sequence is YVCPNCGKIFRWRVNFIRHLRSR. 2 consecutive C2H2-type zinc fingers follow at residues 433-455 and 461-483; these read HKCSVCGELFSDSEDLDGHLETH and YRCTACGKSFRLNSHLISHRRIH. Positions 483–506 are disordered; it reads HLQPASQQPMKKSEEEALETEGTG. A Glycyl lysine isopeptide (Lys-Gly) (interchain with G-Cter in SUMO2) cross-link involves residue Lys494. C2H2-type zinc fingers lie at residues 520–543 and 551–573; these read FQCGDCEKSFQRHDHLVRHRRHCH and FQCRYCVKTFRQNYDLLRHERLH. The short motif at 575–579 is the Nuclear localization signal element; it reads KRRSK.

Belongs to the krueppel C2H2-type zinc-finger protein family. As to quaternary structure, interacts (via zinc-fingers) with JARID2. Interacts with NSD1.

It localises to the nucleus. Its function is as follows. DNA-binding transcription factor that can both act as an activator and a repressor. The chain is Zinc finger protein 496 (Znf496) from Mus musculus (Mouse).